Consider the following 441-residue polypeptide: tRNA-2-methylthio-N(6)-dimethylallyladenosine synthase (441 aa).

Positions 5–121 (KKLFIKTYGC…LPQMEARLRE (117 aa)) constitute an MTTase N-terminal domain. C14, C50, C84, C159, C163, and C166 together coordinate [4Fe-4S] cluster. The Radical SAM core domain maps to 145–380 (ARRAPSAFLT…TRQQQDIQQS (236 aa)). The TRAM domain maps to 379 to 441 (QSMVGRDVSV…RNSLAAVTLA (63 aa)).

It belongs to the methylthiotransferase family. MiaB subfamily. In terms of assembly, monomer. Requires [4Fe-4S] cluster as cofactor.

It is found in the cytoplasm. It catalyses the reaction N(6)-dimethylallyladenosine(37) in tRNA + (sulfur carrier)-SH + AH2 + 2 S-adenosyl-L-methionine = 2-methylsulfanyl-N(6)-dimethylallyladenosine(37) in tRNA + (sulfur carrier)-H + 5'-deoxyadenosine + L-methionine + A + S-adenosyl-L-homocysteine + 2 H(+). Its function is as follows. Catalyzes the methylthiolation of N6-(dimethylallyl)adenosine (i(6)A), leading to the formation of 2-methylthio-N6-(dimethylallyl)adenosine (ms(2)i(6)A) at position 37 in tRNAs that read codons beginning with uridine. The sequence is that of tRNA-2-methylthio-N(6)-dimethylallyladenosine synthase from Roseobacter denitrificans (strain ATCC 33942 / OCh 114) (Erythrobacter sp. (strain OCh 114)).